The primary structure comprises 249 residues: Globin-like protein 9 (249 aa).

Residues 20–43 (TNKGPNGLARRGTQRGCSRSKSTR) form a disordered region. In terms of domain architecture, Globin spans 52–205 (SLTFSQKQAL…LIDELRGGFE (154 aa)). Positions 116 and 148 each coordinate heme.

It belongs to the globin family.

The sequence is that of Globin-like protein 9 (glb-9) from Caenorhabditis elegans.